A 229-amino-acid chain; its full sequence is 1-(5-phosphoribosyl)-5-[(5-phosphoribosylamino)methylideneamino] imidazole-4-carboxamide isomerase (229 aa).

Aspartate 8 serves as the catalytic Proton acceptor. The Proton donor role is filled by aspartate 125.

Belongs to the HisA/HisF family.

Its subcellular location is the cytoplasm. It carries out the reaction 1-(5-phospho-beta-D-ribosyl)-5-[(5-phospho-beta-D-ribosylamino)methylideneamino]imidazole-4-carboxamide = 5-[(5-phospho-1-deoxy-D-ribulos-1-ylimino)methylamino]-1-(5-phospho-beta-D-ribosyl)imidazole-4-carboxamide. It participates in amino-acid biosynthesis; L-histidine biosynthesis; L-histidine from 5-phospho-alpha-D-ribose 1-diphosphate: step 4/9. This Thermococcus onnurineus (strain NA1) protein is 1-(5-phosphoribosyl)-5-[(5-phosphoribosylamino)methylideneamino] imidazole-4-carboxamide isomerase.